The primary structure comprises 124 residues: Holo-[acyl-carrier-protein] synthase (124 aa).

Residues Asp8 and Glu56 each contribute to the Mg(2+) site.

It belongs to the P-Pant transferase superfamily. AcpS family. The cofactor is Mg(2+).

Its subcellular location is the cytoplasm. The enzyme catalyses apo-[ACP] + CoA = holo-[ACP] + adenosine 3',5'-bisphosphate + H(+). Functionally, transfers the 4'-phosphopantetheine moiety from coenzyme A to a Ser of acyl-carrier-protein. The polypeptide is Holo-[acyl-carrier-protein] synthase (Maridesulfovibrio salexigens (strain ATCC 14822 / DSM 2638 / NCIMB 8403 / VKM B-1763) (Desulfovibrio salexigens)).